The primary structure comprises 249 residues: Large ribosomal subunit protein uL1 (249 aa).

Belongs to the universal ribosomal protein uL1 family. As to quaternary structure, part of the 50S ribosomal subunit.

Its function is as follows. Binds directly to 23S rRNA. The L1 stalk is quite mobile in the ribosome, and is involved in E site tRNA release. In terms of biological role, protein L1 is also a translational repressor protein, it controls the translation of the L11 operon by binding to its mRNA. This Orientia tsutsugamushi (strain Ikeda) (Rickettsia tsutsugamushi) protein is Large ribosomal subunit protein uL1.